The chain runs to 276 residues: Bifunctional protein FolD 1 (276 aa).

NADP(+)-binding positions include 161–163 (GRG), S186, and T227.

It belongs to the tetrahydrofolate dehydrogenase/cyclohydrolase family. As to quaternary structure, homodimer.

The catalysed reaction is (6R)-5,10-methylene-5,6,7,8-tetrahydrofolate + NADP(+) = (6R)-5,10-methenyltetrahydrofolate + NADPH. It catalyses the reaction (6R)-5,10-methenyltetrahydrofolate + H2O = (6R)-10-formyltetrahydrofolate + H(+). The protein operates within one-carbon metabolism; tetrahydrofolate interconversion. Functionally, catalyzes the oxidation of 5,10-methylenetetrahydrofolate to 5,10-methenyltetrahydrofolate and then the hydrolysis of 5,10-methenyltetrahydrofolate to 10-formyltetrahydrofolate. This is Bifunctional protein FolD 1 from Frankia casuarinae (strain DSM 45818 / CECT 9043 / HFP020203 / CcI3).